A 151-amino-acid polypeptide reads, in one-letter code: Ribosome maturation factor RimP (151 aa).

Belongs to the RimP family.

The protein resides in the cytoplasm. Functionally, required for maturation of 30S ribosomal subunits. The sequence is that of Ribosome maturation factor RimP from Caldicellulosiruptor saccharolyticus (strain ATCC 43494 / DSM 8903 / Tp8T 6331).